The primary structure comprises 305 residues: Probable alpha-L-glutamate ligase (305 aa).

The region spanning 119–301 is the ATP-grasp domain; that stretch reads LQVLAAQHIP…IAGLIIDYLL (183 aa). ATP is bound by residues lysine 155, 192–193, aspartate 201, and 225–227; these read DF and RAN. Mg(2+) contacts are provided by aspartate 262, glutamate 274, and asparagine 276. Residues aspartate 262, glutamate 274, and asparagine 276 each contribute to the Mn(2+) site.

Belongs to the RimK family. It depends on Mg(2+) as a cofactor. Mn(2+) is required as a cofactor.

The sequence is that of Probable alpha-L-glutamate ligase from Haemophilus ducreyi (strain 35000HP / ATCC 700724).